The following is a 261-amino-acid chain: Putative quercetin 2,3-dioxygenase Ta0133 (261 aa).

The a divalent metal cation site is built by H17, H19, H61, and E63.

This sequence belongs to the pirin family. Requires a divalent metal cation as cofactor.

The catalysed reaction is quercetin + O2 = 2-(3,4-dihydroxybenzoyloxy)-4,6-dihydroxybenzoate + CO. It functions in the pathway flavonoid metabolism; quercetin degradation. In terms of biological role, putative quercetin 2,3-dioxygenase. The polypeptide is Putative quercetin 2,3-dioxygenase Ta0133 (Thermoplasma acidophilum (strain ATCC 25905 / DSM 1728 / JCM 9062 / NBRC 15155 / AMRC-C165)).